Consider the following 518-residue polypeptide: MDYKQEYLKLKQLLLNQRGSGKMNPLLLNNLSSMVFIVGNNILGDDVKAVIISLIEEFNRIASQDLRHNIELSQYYAVGRGLMTREGTIQCENCELVLKYTHSSVCLSNGRIVRKTSGDNEVNCQVSRGMVKFYIKQKTGDQYRYTRIRIARVQQKGSLAPFTDALYLNNDELDKLHEDTGAAISLSHSDLAKQSASRGDLKVKSPSDVAIATKNINKNVDQINRAATESQLGLMNRSRVVSPVPTQTSVNVANTVARNMSIGDKNSAIMVPNNPISLDSSDDVQPVIGAVDERGIELQHVGNGGPVSQSNTLNSKIPVTSAQIPIDANIAVVPSAGLGTSETITGPSKKSTTSVYNKLSQSVSNAFHTDKAQDKVTDKISKETLKQDETGIASSLGKETKNFFGNLWNKAGDTADKMTNWLRNLGSKSTVVPVSKDLSVVTPLPPQKAGFVPVPTNDDSNTNYLQNKVYTNNPPIDMQYSQNAISTVRNGKTNLSLVEHTQDRQSSTRLNPRYNVMY.

Its subcellular location is the virion. This is an uncharacterized protein from Acanthamoeba polyphaga (Amoeba).